The following is a 609-amino-acid chain: MAFRQSEHEMSVTSLDSSVELRSRSPSPQVFNPRKLRFADDDFDKDTPEGASPQHPLQQRPKLSSGEEQQLDSKIGKEGGDGDVSMSPPCQKVRALRLFSTPATPKTILQKSTTQCSNHLSAAAAAVNASRRSDDLFRLSERPRSLPLHNRKLPTQDTANVNPFTPDSLMAHNKKRCRTQFGRENLNLNVNAMQKYLLSDACDDDVTEEAGDSMREIHQQAPKRLALHDTNISRFKREFMQVNVIGVGEFGVVFQCVNRLDGCIYAIKKSKKPVAGSSFEKRALNEVWAHAVLGKHDNVVRYYSAWAEDDHMLIQNEFCDGGSLHARIQDHCLGEAELKIVLMHVIEGLRYIHSNDLVHMDLKPENIFSTMNPNAHKLVEVQPQQTKDDDGMDSVYEELRHSENLVTYKIGDLGHVTSVKEPYVEEGDCRYLPKEILHEDYSNLFKADIFSLGITLFEAAGGGPLPKNGPEWHNLRDGKVPILPSLSRDFNELIAQMMHPYPDKRPTSQSIFSHPILSAVDSKSKLQLGLELTVEKRKNEILMNKLREAKKQIKLLEQRVNLLAVTNNPDSLDGQRCLRSFTRRMRTPFSSHGKFDSISDRNKNVITNI.

Basic and acidic residues predominate over residues 1 to 10; the sequence is MAFRQSEHEM. Disordered regions lie at residues 1–88 and 147–166; these read MAFR…SMSP and PLHN…PFTP. Phosphoserine is present on residues serine 23, serine 25, and serine 27. A compositionally biased stretch (basic and acidic residues) spans 37-48; sequence RFADDDFDKDTP. A Phosphothreonine modification is found at threonine 47. Serine 52 is subject to Phosphoserine. A compositionally biased stretch (polar residues) spans 153–165; that stretch reads LPTQDTANVNPFT. Position 165 is a phosphothreonine (threonine 165). Serine 168 bears the Phosphoserine mark. The 279-residue stretch at 239–517 folds into the Protein kinase domain; the sequence is FMQVNVIGVG…SQSIFSHPIL (279 aa). Residues 245–253 and lysine 268 contribute to the ATP site; that span reads IGVGEFGVV. Residue aspartate 361 is the Proton acceptor of the active site. Positions 366 and 412 each coordinate Mg(2+).

It belongs to the protein kinase superfamily. Ser/Thr protein kinase family. WEE1 subfamily. Mg(2+) is required as a cofactor. Phosphorylated during M and G1 phases. As to expression, expressed in embryos; expression remains high in the proliferating cells of the central nervous system well after cells in the rest of the embryo have ceased dividing.

The protein localises to the nucleus. It carries out the reaction L-tyrosyl-[protein] + ATP = O-phospho-L-tyrosyl-[protein] + ADP + H(+). Its activity is regulated as follows. Negatively regulated by phosphorylation in the M-phase. Functionally, acts as a negative regulator of entry into mitosis (G2 to M transition). This kinase specifically phosphorylates and inactivates cyclin B1-complexed CDC2. In Drosophila melanogaster (Fruit fly), this protein is Wee1-like protein kinase.